The sequence spans 454 residues: Zeatin O-xylosyltransferase (454 aa).

Belongs to the UDP-glycosyltransferase family. As to expression, high level in young seeds, less in older seeds and very low in roots.

It carries out the reaction zeatin + UDP-alpha-D-xylose = O-beta-D-xylosylzeatin + UDP + H(+). In terms of biological role, utilizes UDP-xylose as the sugar donor and catalyzes the formation of o-xylosylzeatin from zeatin. Does not act on UDP-glucose. This is Zeatin O-xylosyltransferase from Phaseolus vulgaris (Kidney bean).